The primary structure comprises 176 residues: Protein tyrosine phosphatase PRL-1 (176 aa).

Residues 13 to 165 (GESDAVVFRF…YKPRHQEGNE (153 aa)) enclose the Tyrosine-protein phosphatase domain. C52 and C107 are joined by a disulfide. D75 (proton donor) is an active-site residue. C107 serves as the catalytic Phosphocysteine intermediate. 109–113 (AGLGR) serves as a coordination point for substrate. A Cysteine methyl ester modification is found at C173. C173 carries the S-farnesyl cysteine lipid modification. A propeptide spans 174–176 (AVM) (removed in mature form).

This sequence belongs to the protein-tyrosine phosphatase family.

It is found in the flagellar pocket. The enzyme catalyses O-phospho-L-tyrosyl-[protein] + H2O = L-tyrosyl-[protein] + phosphate. Its activity is regulated as follows. Activated in a reduced environment which promotes the reduction of the disulfide bond between the regulatory Cys-52 and the catalytic Cys-107 residues. Inhibited by sodium orthovanadate. Its function is as follows. Has protein tyrosine phosphatase activity. The chain is Protein tyrosine phosphatase PRL-1 from Trypanosoma cruzi (strain CL Brener).